The following is a 208-amino-acid chain: UPF0637 protein Bcer98_2662 (208 aa).

The protein belongs to the UPF0637 family.

In Bacillus cytotoxicus (strain DSM 22905 / CIP 110041 / 391-98 / NVH 391-98), this protein is UPF0637 protein Bcer98_2662.